The following is a 293-amino-acid chain: MISGIINLKKEAGMTSHDAVFKLRKILHEKKIGHGGTLDPDVTGVLPIAVGKATRVIEYMTEAGKVYEGEITIGFSTTTEDASGEVVQTTPITELDGATVDQAMASFEGEITQIPPMYSAVKINGKKLYEYARAGEEVERPQRQVKITEFVRTSPIELENGTARFTFRVACSKGTYVRTLSVDLGVKLGFASHMSALRRTASAGLTLDSSLSLSQISEMVEAGDQSFLLPIEFGVQDLPAVQVTEDDAKEISFGRFISINSQEPLVAAFLGNKVLAIMEKRGQVYKPRKVLSQ.

The Nucleophile role is filled by Asp-39.

It belongs to the pseudouridine synthase TruB family. Type 1 subfamily.

The enzyme catalyses uridine(55) in tRNA = pseudouridine(55) in tRNA. Functionally, responsible for synthesis of pseudouridine from uracil-55 in the psi GC loop of transfer RNAs. The chain is tRNA pseudouridine synthase B from Streptococcus thermophilus (strain CNRZ 1066).